A 457-amino-acid chain; its full sequence is tRNA-2-methylthio-N(6)-dimethylallyladenosine synthase (457 aa).

Residues 3–120 (KKVYVKTFGC…LPQMIDKRRE (118 aa)) enclose the MTTase N-terminal domain. [4Fe-4S] cluster contacts are provided by Cys12, Cys49, Cys83, Cys157, Cys161, and Cys164. The Radical SAM core domain occupies 143–377 (RVDGPSAFVS…QATIEENVQR (235 aa)). The 68-residue stretch at 380-447 (DSMVGKIERI…PHSLRGELVL (68 aa)) folds into the TRAM domain.

This sequence belongs to the methylthiotransferase family. MiaB subfamily. Monomer. Requires [4Fe-4S] cluster as cofactor.

The protein resides in the cytoplasm. The catalysed reaction is N(6)-dimethylallyladenosine(37) in tRNA + (sulfur carrier)-SH + AH2 + 2 S-adenosyl-L-methionine = 2-methylsulfanyl-N(6)-dimethylallyladenosine(37) in tRNA + (sulfur carrier)-H + 5'-deoxyadenosine + L-methionine + A + S-adenosyl-L-homocysteine + 2 H(+). In terms of biological role, catalyzes the methylthiolation of N6-(dimethylallyl)adenosine (i(6)A), leading to the formation of 2-methylthio-N6-(dimethylallyl)adenosine (ms(2)i(6)A) at position 37 in tRNAs that read codons beginning with uridine. In Paraburkholderia phytofirmans (strain DSM 17436 / LMG 22146 / PsJN) (Burkholderia phytofirmans), this protein is tRNA-2-methylthio-N(6)-dimethylallyladenosine synthase.